Consider the following 137-residue polypeptide: Basic phospholipase A2 homolog bothropstoxin-I (137 aa).

The N-terminal stretch at 1 to 16 is a signal peptide; sequence MRTLWIMAVLLVGVEG. 7 disulfide bridges follow: C42-C131, C44-C60, C59-C111, C65-C137, C66-C104, C73-C97, and C91-C102. The tract at residues 121-133 is important for membrane-damaging activities in eukaryotes and bacteria; heparin-binding; the sequence is KKYRYHLKPFCKK.

This sequence belongs to the phospholipase A2 family. Group II subfamily. K49 sub-subfamily. In terms of assembly, homodimer; non-covalently linked (probable alternative/compact dimer conformation in solution). Binds to heparin. Expressed by the venom gland.

Its subcellular location is the secreted. Suramin inhibits both myotoxic and muscle-paralyzing activities. Chicoric acid inhibits myotoxic activity. Zinc ions inhibits the myotoxic activity and the neuromuscular blockade. Heparin inhibits myotoxic activity. Snake venom phospholipase A2 homolog that lacks enzymatic activity. Shows local myotoxic activity. Induces inflammation, since it induces edema and leukocytes infiltration. In addition, it induces NLRP3 NLRP3, ASC (PYCARD), caspase-1 (CASP1), and IL-1beta (IL1B) gene expression in the gastrocnemius muscle, showing that it is able to activate NLRP3 inflammasome. It also damages artificial and myoblast membranes by a calcium-independent mechanism, has bactericidal activity, and induces neuromuscular blockade. A model of myotoxic mechanism has been proposed: an apo Lys49-PLA2 is activated by the entrance of a hydrophobic molecule (e.g. fatty acid) at the hydrophobic channel of the protein leading to a reorientation of a monomer. This reorientation causes a transition between 'inactive' to 'active' states, causing alignment of C-terminal and membrane-docking sites (MDoS) side-by-side and putting the membrane-disruption sites (MDiS) in the same plane, exposed to solvent and in a symmetric position for both monomers. The MDoS region stabilizes the toxin on membrane by the interaction of charged residues with phospholipid head groups. Subsequently, the MDiS region destabilizes the membrane with penetration of hydrophobic residues. This insertion causes a disorganization of the membrane, allowing an uncontrolled influx of ions (i.e. calcium and sodium), and eventually triggering irreversible intracellular alterations and cell death. The chain is Basic phospholipase A2 homolog bothropstoxin-I from Bothrops jararacussu (Jararacussu).